A 503-amino-acid polypeptide reads, in one-letter code: Carboxyl-terminal PDZ ligand of neuronal nitric oxide synthase protein (503 aa).

The region spanning 26-191 (FQHGISFEAK…ESERNSDGSG (166 aa)) is the PID domain. A disordered region spans residues 170–212 (HTQQNADGQEDGESERNSDGSGDPGRQLTGAERVSTAAAEETD). 4 positions are modified to phosphoserine: Ser-183, Ser-187, Ser-190, and Ser-262. The stretch at 318-359 (AAEAAARLEAQARVHQLLLQNKDMLQHISLLVKQVQELELKL) forms a coiled coil. A phosphoserine mark is found at Ser-367, Ser-370, Ser-397, and Ser-413. The tract at residues 491–503 (QELGDSLDDEIAV) is interaction with NOS1. The short motif at 501–503 (IAV) is the PDZ-binding element.

In terms of assembly, interacts with the PDZ domain of NOS1 or the second PDZ domain of DLG4 through its C-terminus. Interacts with RASD1 and SYN1, SYN2 and SYN3 via its PID domain. Forms a ternary complex with NOS1 and SYN1. Forms a ternary complex with NOS1 and RASD1.

Its subcellular location is the cell projection. It is found in the filopodium. The protein localises to the podosome. Adapter protein involved in neuronal nitric-oxide (NO) synthesis regulation via its association with nNOS/NOS1. The complex formed with NOS1 and synapsins is necessary for specific NO and synapsin functions at a presynaptic level. Mediates an indirect interaction between NOS1 and RASD1 leading to enhance the ability of NOS1 to activate RASD1. Competes with DLG4 for interaction with NOS1, possibly affecting NOS1 activity by regulating the interaction between NOS1 and DLG4. In kidney podocytes, plays a role in podosomes and filopodia formation through CDC42 activation. The polypeptide is Carboxyl-terminal PDZ ligand of neuronal nitric oxide synthase protein (Mus musculus (Mouse)).